The sequence spans 267 residues: Small ribosomal subunit protein uS3 (267 aa).

A KH type-2 domain is found at 43-111 (IRKEMSKDLE…QVQLNIFEVK (69 aa)). The tract at residues 216 to 267 (FEEQQAQQNNRPGRRGGDRRPRRGNRSAAPQAAEAPKAEAPAEAAPAAETKE) is disordered. Over residues 241–267 (RSAAPQAAEAPKAEAPAEAAPAAETKE) the composition is skewed to low complexity.

This sequence belongs to the universal ribosomal protein uS3 family. Part of the 30S ribosomal subunit. Forms a tight complex with proteins S10 and S14.

Its function is as follows. Binds the lower part of the 30S subunit head. Binds mRNA in the 70S ribosome, positioning it for translation. This is Small ribosomal subunit protein uS3 from Bifidobacterium longum (strain DJO10A).